The following is a 504-amino-acid chain: Sodium-coupled neutral amino acid symporter 2 (504 aa).

Residues 1–22 form a disordered region; that stretch reads MKKTEMGRFNISPDEDSSSYSS. Residues 1 to 76 lie on the Cytoplasmic side of the membrane; sequence MKKTEMGRFN…HPGTTSFGMS (76 aa). A regulates protein turnover upon amino acid deprivation region spans residues 1–96; the sequence is MKKTEMGRFN…SGILGLSYAM (96 aa). 4 positions are modified to phosphoserine: S12, S21, S22, and S55. A helical membrane pass occupies residues 77 to 96; the sequence is VFNLSNAIVGSGILGLSYAM. Na(+) is bound at residue N82. Residues 97–102 are Extracellular-facing; sequence ANTGIA. Residues 103–123 form a helical membrane-spanning segment; that stretch reads LFIILLTFVSIFSLYSVHLLL. Residues 124-158 lie on the Cytoplasmic side of the membrane; it reads KTANEGGSLLYEQLGHKAYGLAGKLAASGSITMQN. Residues 159–177 traverse the membrane as a helical segment; sequence IGAMSSYLFIVKYELPLVI. The Extracellular portion of the chain corresponds to 178 to 188; it reads KALMNIEDTNG. The chain crosses the membrane as a helical span at residues 189–209; sequence LWYLNGDYLVLLVSFVLILPL. Over 210-217 the chain is Cytoplasmic; the sequence is SLLRNLGY. A helical membrane pass occupies residues 218-238; it reads LGYTSGLSLLCMIFFLIVVIC. The Extracellular segment spans residues 239-290; that stretch reads KKFQIPCPVEVALMANETVNGTFTQVALAALASNSTAADTCRPRYFIFNSQT. An intrachain disulfide couples C245 to C279. Residues N254, N258, and N272 are each glycosylated (N-linked (GlcNAc...) asparagine). Residues 291 to 311 traverse the membrane as a helical segment; that stretch reads VYAVPILTFSFVCHPAVLPIY. Over 312–327 the chain is Cytoplasmic; that stretch reads EELKSRSRRRMMNVSK. Residues 328–348 form a helical membrane-spanning segment; it reads ISFFAMFLMYLLAALFGYLTF. Over 349 to 369 the chain is Extracellular; it reads YEHVESELLHTYSAIVGTDIL. The helical transmembrane segment at 370–390 threads the bilayer; the sequence is LLVVRLAVLVAVTLTVPVVIF. T384 contacts Na(+). Residues 391 to 411 lie on the Cytoplasmic side of the membrane; the sequence is PIRSSVTHLLCPTKEFSWFRH. The helical transmembrane segment at 412–432 threads the bilayer; sequence SVITVTILAFTNLLVIFVPTI. At 433-434 the chain is on the extracellular side; sequence RD. A helical transmembrane segment spans residues 435-455; that stretch reads IFGFIGASAAAMLIFILPSAF. The Cytoplasmic portion of the chain corresponds to 456 to 470; that stretch reads YIKLVKKEPMRSVQK. Residues 471-493 form a helical membrane-spanning segment; that stretch reads IGALCFLLSGVVVMIGSMGLIVL. Over 494–504 the chain is Extracellular; sequence DWVHDASAGGH.

Belongs to the amino acid/polyamine transporter 2 family. In terms of processing, polyubiquitination by NEDD4L regulates the degradation and the activity of SLC38A2. Widely expressed. Expressed in skeletal muscle and adipose tissue (at protein level). Expressed by glutamatergic and GABAergic neurons together with astrocytes and other non-neuronal cells in the cerebral cortex (at protein level). Widely expressed in the central nervous systeme where, it is enriched in the spinal cord and the brainstem nuclei, especially those of the auditory system.

The protein resides in the cell membrane. It catalyses the reaction L-alanine(in) + Na(+)(in) = L-alanine(out) + Na(+)(out). The catalysed reaction is glycine(in) + Na(+)(in) = glycine(out) + Na(+)(out). It carries out the reaction L-serine(in) + Na(+)(in) = L-serine(out) + Na(+)(out). The enzyme catalyses L-proline(in) + Na(+)(in) = L-proline(out) + Na(+)(out). It catalyses the reaction L-methionine(in) + Na(+)(in) = L-methionine(out) + Na(+)(out). The catalysed reaction is L-histidine(in) + Na(+)(in) = L-histidine(out) + Na(+)(out). It carries out the reaction L-asparagine(in) + Na(+)(in) = L-asparagine(out) + Na(+)(out). The enzyme catalyses L-glutamine(in) + Na(+)(in) = L-glutamine(out) + Na(+)(out). It catalyses the reaction L-threonine(in) + Na(+)(in) = L-threonine(out) + Na(+)(out). The catalysed reaction is L-leucine(in) + Na(+)(in) = L-leucine(out) + Na(+)(out). It carries out the reaction L-phenylalanine(in) + Na(+)(in) = L-phenylalanine(out) + Na(+)(out). Its activity is regulated as follows. Inhibited by N-methyl-D-glucamine. Inhibited by choline. Allosteric regulation of sodium ions binding by pH. Functionally, symporter that cotransports neutral amino acids and sodium ions from the extracellular to the intracellular side of the cell membrane. The transport is pH-sensitive, Li(+)-intolerant, electrogenic, driven by the Na(+) electrochemical gradient and cotransports of neutral amino acids and sodium ions with a stoichiometry of 1:1. May function in the transport of amino acids at the blood-brain barrier. May function in the transport of amino acids in the supply of maternal nutrients to the fetus through the placenta. Maintains a key metabolic glutamine/glutamate balance underpinning retrograde signaling by dendritic release of the neurotransmitter glutamate. Transports L-proline in differentiating osteoblasts for the efficient synthesis of proline-enriched proteins and provides proline essential for osteoblast differentiation and bone formation during bone development. The protein is Sodium-coupled neutral amino acid symporter 2 of Rattus norvegicus (Rat).